The following is a 698-amino-acid chain: eEF1A lysine and N-terminal methyltransferase (698 aa).

M1 carries the post-translational modification N-acetylmethionine. Phosphoserine is present on S267. The segment at 431 to 461 is disordered; it reads KDTSHRAQKKRKKDRKKQRPADTSEDFPPAP. A compositionally biased stretch (basic residues) spans 436–448; sequence RAQKKRKKDRKKQ.

It belongs to the methyltransferase superfamily. Forms a tripartite complex containing GAB1, METTL13 and SPRY2. Within the complex interacts with GAB1 and SPRY2. In terms of tissue distribution, expressed in the inner ear (at protein level). Expression is detected in the cochlear duct, spiral limbus region, efferent and afferent nerves, and in spiral ganglion neurons (at protein level).

The protein resides in the cytoplasm. It is found in the nucleus. Its subcellular location is the mitochondrion. The enzyme catalyses L-lysyl-[protein] + S-adenosyl-L-methionine = N(6)-methyl-L-lysyl-[protein] + S-adenosyl-L-homocysteine + H(+). It carries out the reaction N(6)-methyl-L-lysyl-[protein] + S-adenosyl-L-methionine = N(6),N(6)-dimethyl-L-lysyl-[protein] + S-adenosyl-L-homocysteine + H(+). It catalyses the reaction N-terminal glycyl-L-lysyl-L-glutamyl-[protein] + 3 S-adenosyl-L-methionine = N-terminal N,N,N-trimethyl-glycyl-L-lysyl-L-glutamyl-[protein] + 3 S-adenosyl-L-homocysteine + 3 H(+). Dual methyltransferase that catalyzes methylation of elongation factor 1-alpha (EEF1A1 and EEF1A2) at two different positions, and is therefore involved in the regulation of mRNA translation. Via its C-terminus, methylates EEF1A1 and EEF1A2 at the N-terminal residue 'Gly-2'. Via its N-terminus dimethylates EEF1A1 and EEF1A2 at residue 'Lys-55'. Has no activity towards core histones H2A, H2B, H3 and H4. This is eEF1A lysine and N-terminal methyltransferase from Mus musculus (Mouse).